Consider the following 453-residue polypeptide: Validoxylamine A glucosyltransferase (453 aa).

This sequence belongs to the glycosyltransferase 2 family. Mn(2+) serves as cofactor.

The catalysed reaction is validoxylamine A + UDP-alpha-D-glucose = validamycin A + UDP + H(+). Its function is as follows. Involved in the biosynthesis of the antifungal agent validamycin A. Catalyzes the final attachment of glucose from UDP-alpha-D-glucose to validoxylamine A to yield validamycin A. This chain is Validoxylamine A glucosyltransferase, found in Streptomyces hygroscopicus subsp. limoneus.